We begin with the raw amino-acid sequence, 175 residues long: Peptide methionine sulfoxide reductase MsrA (175 aa).

Cys-10 is an active-site residue.

This sequence belongs to the MsrA Met sulfoxide reductase family.

The enzyme catalyses L-methionyl-[protein] + [thioredoxin]-disulfide + H2O = L-methionyl-(S)-S-oxide-[protein] + [thioredoxin]-dithiol. It carries out the reaction [thioredoxin]-disulfide + L-methionine + H2O = L-methionine (S)-S-oxide + [thioredoxin]-dithiol. Has an important function as a repair enzyme for proteins that have been inactivated by oxidation. Catalyzes the reversible oxidation-reduction of methionine sulfoxide in proteins to methionine. The protein is Peptide methionine sulfoxide reductase MsrA of Clavibacter sepedonicus (Clavibacter michiganensis subsp. sepedonicus).